Here is a 114-residue protein sequence, read N- to C-terminus: Fluoride-specific ion channel FluC 1 (114 aa).

4 consecutive transmembrane segments (helical) span residues 3–23 (IDIK…GALF), 30–50 (IFIV…LNIL), 55–75 (LTLC…MSHL), and 87–107 (FLLN…LGHI). 2 residues coordinate Na(+): G63 and T66.

The protein belongs to the fluoride channel Fluc/FEX (TC 1.A.43) family.

The protein resides in the cell inner membrane. The enzyme catalyses fluoride(in) = fluoride(out). Its activity is regulated as follows. Na(+) is not transported, but it plays an essential structural role and its presence is essential for fluoride channel function. Functionally, fluoride-specific ion channel. Important for reducing fluoride concentration in the cell, thus reducing its toxicity. The polypeptide is Fluoride-specific ion channel FluC 1 (Prochlorococcus marinus (strain NATL2A)).